Consider the following 117-residue polypeptide: MDKSKRPFIKSKRSFRRRLPPIKSGDRIDYRNISLISRFLSEQGKILSKRVNRFTLKQQRLITLAIKQARILSLLPFTKRKGFERSELTPRTNALKARNKNKQNKYQNNQTKFLSNF.

A disordered region spans residues 86–117 (SELTPRTNALKARNKNKQNKYQNNQTKFLSNF).

This sequence belongs to the bacterial ribosomal protein bS18 family. As to quaternary structure, part of the 30S ribosomal subunit.

Its subcellular location is the plastid. In Cuscuta exaltata (Tall dodder), this protein is Small ribosomal subunit protein bS18c.